Reading from the N-terminus, the 310-residue chain is Epoxyqueuosine reductase (310 aa).

Residue Asp-133 is the Proton donor of the active site. The 4Fe-4S ferredoxin-type domain occupies 179–208; that stretch reads YDNPSDKDYCGTCTRCVDACPTDAILQDNL. [4Fe-4S] cluster is bound by residues Cys-188, Cys-191, Cys-194, Cys-198, Cys-214, Cys-241, Cys-244, and Cys-248.

Belongs to the QueG family. Monomer. Cob(II)alamin is required as a cofactor. The cofactor is [4Fe-4S] cluster.

The protein localises to the cytoplasm. The enzyme catalyses epoxyqueuosine(34) in tRNA + AH2 = queuosine(34) in tRNA + A + H2O. It functions in the pathway tRNA modification; tRNA-queuosine biosynthesis. Functionally, catalyzes the conversion of epoxyqueuosine (oQ) to queuosine (Q), which is a hypermodified base found in the wobble positions of tRNA(Asp), tRNA(Asn), tRNA(His) and tRNA(Tyr). This is Epoxyqueuosine reductase from Cyclobacterium marinum (strain ATCC 25205 / DSM 745 / LMG 13164 / NCIMB 1802) (Flectobacillus marinus).